A 368-amino-acid polypeptide reads, in one-letter code: Molybdenum import ATP-binding protein ModC (368 aa).

Positions 1–230 (MTIKIQFKQT…HAMRPWQSFS (230 aa)) constitute an ABC transporter domain. 32–39 (GRSGAGKT) contacts ATP. Residues 291 to 362 (ATSIRNVLPA…VKGVSVTQRD (72 aa)) enclose the Mop domain.

This sequence belongs to the ABC transporter superfamily. Molybdate importer (TC 3.A.1.8) family. The complex is composed of two ATP-binding proteins (ModC), two transmembrane proteins (ModB) and a solute-binding protein (ModA).

The protein resides in the cell inner membrane. It catalyses the reaction molybdate(out) + ATP + H2O = molybdate(in) + ADP + phosphate + H(+). Functionally, part of the ABC transporter complex ModABC involved in molybdenum import. Responsible for energy coupling to the transport system. In Vibrio parahaemolyticus serotype O3:K6 (strain RIMD 2210633), this protein is Molybdenum import ATP-binding protein ModC.